Consider the following 352-residue polypeptide: Heat-inducible transcription repressor HrcA (352 aa).

The protein belongs to the HrcA family.

Functionally, negative regulator of class I heat shock genes (grpE-dnaK-dnaJ and groELS operons). Prevents heat-shock induction of these operons. This is Heat-inducible transcription repressor HrcA from Latilactobacillus sakei (Lactobacillus sakei).